The following is a 257-amino-acid chain: Probable pectate lyase G (257 aa).

Positions methionine 1 to alanine 24 are cleaved as a signal peptide.

It belongs to the polysaccharide lyase 3 family. Ca(2+) is required as a cofactor.

It is found in the secreted. The catalysed reaction is Eliminative cleavage of (1-&gt;4)-alpha-D-galacturonan to give oligosaccharides with 4-deoxy-alpha-D-galact-4-enuronosyl groups at their non-reducing ends.. Functionally, pectinolytic enzyme consist of four classes of enzymes: pectin lyase, polygalacturonase, pectin methylesterase and rhamnogalacturonase. Among pectinolytic enzymes, pectin lyase is the most important in depolymerization of pectin, since it cleaves internal glycosidic bonds of highly methylated pectins. Favors pectate, the anion, over pectin, the methyl ester. This Emericella nidulans (strain FGSC A4 / ATCC 38163 / CBS 112.46 / NRRL 194 / M139) (Aspergillus nidulans) protein is Probable pectate lyase G (plyG).